The primary structure comprises 348 residues: Anthranilate phosphoribosyltransferase (348 aa).

5-phospho-alpha-D-ribose 1-diphosphate-binding positions include Gly93, 96 to 97, Thr101, 103 to 106, 121 to 129, and Ser133; these read GD, NVST, and KHGNRAVSS. Position 93 (Gly93) interacts with anthranilate. Residue Ser105 participates in Mg(2+) binding. Residue Asn124 participates in anthranilate binding. Arg179 lines the anthranilate pocket. Mg(2+) contacts are provided by Asp238 and Glu239.

Belongs to the anthranilate phosphoribosyltransferase family. In terms of assembly, homodimer. Mg(2+) is required as a cofactor.

The catalysed reaction is N-(5-phospho-beta-D-ribosyl)anthranilate + diphosphate = 5-phospho-alpha-D-ribose 1-diphosphate + anthranilate. It participates in amino-acid biosynthesis; L-tryptophan biosynthesis; L-tryptophan from chorismate: step 2/5. Its function is as follows. Catalyzes the transfer of the phosphoribosyl group of 5-phosphorylribose-1-pyrophosphate (PRPP) to anthranilate to yield N-(5'-phosphoribosyl)-anthranilate (PRA). The chain is Anthranilate phosphoribosyltransferase from Desulfotalea psychrophila (strain LSv54 / DSM 12343).